The chain runs to 159 residues: 6,7-dimethyl-8-ribityllumazine synthase (159 aa).

Residues Phe-22, 57–59 (AVE), and 81–83 (AVI) contribute to the 5-amino-6-(D-ribitylamino)uracil site. 86-87 (GT) lines the (2S)-2-hydroxy-3-oxobutyl phosphate pocket. The active-site Proton donor is His-89. A 5-amino-6-(D-ribitylamino)uracil-binding site is contributed by Phe-114. Arg-128 lines the (2S)-2-hydroxy-3-oxobutyl phosphate pocket.

It belongs to the DMRL synthase family. In terms of assembly, forms an icosahedral capsid composed of 60 subunits, arranged as a dodecamer of pentamers.

It carries out the reaction (2S)-2-hydroxy-3-oxobutyl phosphate + 5-amino-6-(D-ribitylamino)uracil = 6,7-dimethyl-8-(1-D-ribityl)lumazine + phosphate + 2 H2O + H(+). It functions in the pathway cofactor biosynthesis; riboflavin biosynthesis; riboflavin from 2-hydroxy-3-oxobutyl phosphate and 5-amino-6-(D-ribitylamino)uracil: step 1/2. Its function is as follows. Catalyzes the formation of 6,7-dimethyl-8-ribityllumazine by condensation of 5-amino-6-(D-ribitylamino)uracil with 3,4-dihydroxy-2-butanone 4-phosphate. This is the penultimate step in the biosynthesis of riboflavin. The protein is 6,7-dimethyl-8-ribityllumazine synthase of Shewanella baltica (strain OS155 / ATCC BAA-1091).